Reading from the N-terminus, the 409-residue chain is Tyrosine--tRNA ligase (409 aa).

L-tyrosine is bound at residue tyrosine 35. The 'HIGH' region signature appears at 40–49; that stretch reads CTAESLHVGS. The L-tyrosine site is built by tyrosine 172 and glutamine 176. A 'KMSKS' region motif is present at residues 232 to 236; that stretch reads KMGKT. Lysine 235 is a binding site for ATP. The region spanning 343–409 is the S4 RNA-binding domain; sequence ISILDLVILS…KKKHIKVELI (67 aa).

This sequence belongs to the class-I aminoacyl-tRNA synthetase family. TyrS type 1 subfamily. As to quaternary structure, homodimer.

It localises to the cytoplasm. It catalyses the reaction tRNA(Tyr) + L-tyrosine + ATP = L-tyrosyl-tRNA(Tyr) + AMP + diphosphate + H(+). In terms of biological role, catalyzes the attachment of tyrosine to tRNA(Tyr) in a two-step reaction: tyrosine is first activated by ATP to form Tyr-AMP and then transferred to the acceptor end of tRNA(Tyr). This Pelagibacter ubique (strain HTCC1062) protein is Tyrosine--tRNA ligase.